Reading from the N-terminus, the 336-residue chain is 4-hydroxy-2-oxovalerate aldolase (336 aa).

Positions 4 to 254 constitute a Pyruvate carboxyltransferase domain; sequence PRLTDTTLRD…NPGLDVLALM (251 aa). Residue 12 to 13 coordinates substrate; sequence RD. Aspartate 13 lines the Mn(2+) pocket. Histidine 16 functions as the Proton acceptor in the catalytic mechanism. Residues serine 166 and histidine 193 each coordinate substrate. 2 residues coordinate Mn(2+): histidine 193 and histidine 195. Residue tyrosine 284 participates in substrate binding.

Belongs to the 4-hydroxy-2-oxovalerate aldolase family.

It carries out the reaction (S)-4-hydroxy-2-oxopentanoate = acetaldehyde + pyruvate. The sequence is that of 4-hydroxy-2-oxovalerate aldolase from Roseiflexus castenholzii (strain DSM 13941 / HLO8).